We begin with the raw amino-acid sequence, 344 residues long: Fructose-1,6-bisphosphatase, cytosolic (344 aa).

Mg(2+) contacts are provided by glutamate 71, glutamate 100, aspartate 121, leucine 123, and aspartate 124. Residues 124-127, asparagine 215, tyrosine 247, tyrosine 267, and lysine 277 each bind substrate; that span reads DGSS. Mg(2+) is bound at residue glutamate 283.

The protein belongs to the FBPase class 1 family. Requires Mg(2+) as cofactor.

The protein localises to the cytoplasm. It carries out the reaction beta-D-fructose 1,6-bisphosphate + H2O = beta-D-fructose 6-phosphate + phosphate. The polypeptide is Fructose-1,6-bisphosphatase, cytosolic (Oryza coarctata (Wild rice)).